The chain runs to 316 residues: 4-hydroxy-3-methylbut-2-enyl diphosphate reductase (316 aa).

Cys-12 lines the [4Fe-4S] cluster pocket. Positions 43 and 81 each coordinate (2E)-4-hydroxy-3-methylbut-2-enyl diphosphate. Residues His-43 and His-81 each contribute to the dimethylallyl diphosphate site. Isopentenyl diphosphate is bound by residues His-43 and His-81. Cys-103 is a [4Fe-4S] cluster binding site. His-131 serves as a coordination point for (2E)-4-hydroxy-3-methylbut-2-enyl diphosphate. Residue His-131 coordinates dimethylallyl diphosphate. His-131 contributes to the isopentenyl diphosphate binding site. The active-site Proton donor is Glu-133. Position 170 (Thr-170) interacts with (2E)-4-hydroxy-3-methylbut-2-enyl diphosphate. Position 198 (Cys-198) interacts with [4Fe-4S] cluster. Residues Ser-226, Asn-228, and Ser-271 each coordinate (2E)-4-hydroxy-3-methylbut-2-enyl diphosphate. The dimethylallyl diphosphate site is built by Ser-226, Asn-228, and Ser-271. The isopentenyl diphosphate site is built by Ser-226, Asn-228, and Ser-271.

This sequence belongs to the IspH family. Requires [4Fe-4S] cluster as cofactor.

The enzyme catalyses isopentenyl diphosphate + 2 oxidized [2Fe-2S]-[ferredoxin] + H2O = (2E)-4-hydroxy-3-methylbut-2-enyl diphosphate + 2 reduced [2Fe-2S]-[ferredoxin] + 2 H(+). It catalyses the reaction dimethylallyl diphosphate + 2 oxidized [2Fe-2S]-[ferredoxin] + H2O = (2E)-4-hydroxy-3-methylbut-2-enyl diphosphate + 2 reduced [2Fe-2S]-[ferredoxin] + 2 H(+). It functions in the pathway isoprenoid biosynthesis; dimethylallyl diphosphate biosynthesis; dimethylallyl diphosphate from (2E)-4-hydroxy-3-methylbutenyl diphosphate: step 1/1. Its pathway is isoprenoid biosynthesis; isopentenyl diphosphate biosynthesis via DXP pathway; isopentenyl diphosphate from 1-deoxy-D-xylulose 5-phosphate: step 6/6. In terms of biological role, catalyzes the conversion of 1-hydroxy-2-methyl-2-(E)-butenyl 4-diphosphate (HMBPP) into a mixture of isopentenyl diphosphate (IPP) and dimethylallyl diphosphate (DMAPP). Acts in the terminal step of the DOXP/MEP pathway for isoprenoid precursor biosynthesis. The sequence is that of 4-hydroxy-3-methylbut-2-enyl diphosphate reductase from Bacillus mycoides (strain KBAB4) (Bacillus weihenstephanensis).